The sequence spans 346 residues: Phosphoribosylformylglycinamidine cyclo-ligase (346 aa).

Belongs to the AIR synthase family.

The protein resides in the cytoplasm. The catalysed reaction is 2-formamido-N(1)-(5-O-phospho-beta-D-ribosyl)acetamidine + ATP = 5-amino-1-(5-phospho-beta-D-ribosyl)imidazole + ADP + phosphate + H(+). Its pathway is purine metabolism; IMP biosynthesis via de novo pathway; 5-amino-1-(5-phospho-D-ribosyl)imidazole from N(2)-formyl-N(1)-(5-phospho-D-ribosyl)glycinamide: step 2/2. This chain is Phosphoribosylformylglycinamidine cyclo-ligase, found in Bacillus cereus (strain G9842).